Reading from the N-terminus, the 257-residue chain is Global transcriptional regulator CodY (257 aa).

The tract at residues 1 to 155 is GAF domain; sequence MSLLSKTREL…AATVLGMEIL (155 aa). Positions 203-222 form a DNA-binding region, H-T-H motif; sequence ASKVADRVGITRSVIVNALR.

The protein belongs to the CodY family.

It is found in the cytoplasm. Its function is as follows. DNA-binding global transcriptional regulator which is involved in the adaptive response to starvation and acts by directly or indirectly controlling the expression of numerous genes in response to nutrient availability. During rapid exponential growth, CodY is highly active and represses genes whose products allow adaptation to nutrient depletion. The polypeptide is Global transcriptional regulator CodY (Staphylococcus carnosus (strain TM300)).